The following is a 183-amino-acid chain: Adenine phosphoribosyltransferase (183 aa).

The protein belongs to the purine/pyrimidine phosphoribosyltransferase family. Homodimer.

The protein localises to the cytoplasm. It catalyses the reaction AMP + diphosphate = 5-phospho-alpha-D-ribose 1-diphosphate + adenine. It participates in purine metabolism; AMP biosynthesis via salvage pathway; AMP from adenine: step 1/1. Functionally, catalyzes a salvage reaction resulting in the formation of AMP, that is energically less costly than de novo synthesis. The chain is Adenine phosphoribosyltransferase from Shigella flexneri serotype 5b (strain 8401).